A 76-amino-acid chain; its full sequence is Cytochrome c oxidase subunit 6C-1 (76 aa).

The Mitochondrial matrix segment spans residues 2-10 (SLAKPAMRG). The helical transmembrane segment at 11–51 (LLGKRLRFHLPIAFTLSLVAALGFKYGVTEPRKQAYADFYK) threads the bilayer. Residues 52 to 76 (QYDAVKDFNAMREAGIFESVRPSGE) are Mitochondrial intermembrane-facing.

Belongs to the cytochrome c oxidase subunit 6c family. As to quaternary structure, component of the cytochrome c oxidase (complex IV, CIV), a multisubunit enzyme composed of 14 subunits. The complex is composed of a catalytic core of 3 subunits MT-CO1, MT-CO2 and MT-CO3, encoded in the mitochondrial DNA, and 11 supernumerary subunits COX4I, COX5A, COX5B, COX6A, COX6B, COX6C, COX7A, COX7B, COX7C, COX8 and NDUFA4, which are encoded in the nuclear genome. The complex exists as a monomer or a dimer and forms supercomplexes (SCs) in the inner mitochondrial membrane with NADH-ubiquinone oxidoreductase (complex I, CI) and ubiquinol-cytochrome c oxidoreductase (cytochrome b-c1 complex, complex III, CIII), resulting in different assemblies (supercomplex SCI(1)III(2)IV(1) and megacomplex MCI(2)III(2)IV(2)).

The protein localises to the mitochondrion inner membrane. Its pathway is energy metabolism; oxidative phosphorylation. Component of the cytochrome c oxidase, the last enzyme in the mitochondrial electron transport chain which drives oxidative phosphorylation. The respiratory chain contains 3 multisubunit complexes succinate dehydrogenase (complex II, CII), ubiquinol-cytochrome c oxidoreductase (cytochrome b-c1 complex, complex III, CIII) and cytochrome c oxidase (complex IV, CIV), that cooperate to transfer electrons derived from NADH and succinate to molecular oxygen, creating an electrochemical gradient over the inner membrane that drives transmembrane transport and the ATP synthase. Cytochrome c oxidase is the component of the respiratory chain that catalyzes the reduction of oxygen to water. Electrons originating from reduced cytochrome c in the intermembrane space (IMS) are transferred via the dinuclear copper A center (CU(A)) of subunit 2 and heme A of subunit 1 to the active site in subunit 1, a binuclear center (BNC) formed by heme A3 and copper B (CU(B)). The BNC reduces molecular oxygen to 2 water molecules using 4 electrons from cytochrome c in the IMS and 4 protons from the mitochondrial matrix. This Thunnus obesus (Bigeye tuna) protein is Cytochrome c oxidase subunit 6C-1.